Here is a 620-residue protein sequence, read N- to C-terminus: bZIP transcription factor 49 (620 aa).

Over 1 to 287 (MAEPVLEDTY…VAKVKKFKKV (287 aa)) the chain is Cytoplasmic. A compositionally biased stretch (polar residues) spans 109-135 (SSCYNRESPTDSDFSGTSQSLSFSGQD). Positions 109–155 (SSCYNRESPTDSDFSGTSQSLSFSGQDSAKRKTEIEEDSSDESRRLG) are disordered. The 64-residue stretch at 172–235 (EKKKNVRLVR…VTLRQQMGTR (64 aa)) folds into the bZIP domain. The basic motif stretch occupies residues 173–205 (KKKNVRLVRNRESAHLSRQRKKHYVEELEDKVK). Residues 211-218 (ISELSSKM) form a leucine-zipper region. A helical transmembrane segment spans residues 288–308 (ASFSVFGFLFCMFLFGALVNI). Residues 309-620 (SYGEYKSNYV…RPDVPHLMTS (312 aa)) lie on the Lumenal side of the membrane. 3 disordered regions span residues 343-364 (DSDQGVGRNVSETENLGPPRNS), 398-460 (ARDS…SNDQ), and 505-557 (PASP…RETK). N-linked (GlcNAc...) asparagine glycans are attached at residues asparagine 351 and asparagine 363. Residues 352–364 (VSETENLGPPRNS) are compositionally biased toward polar residues. Basic and acidic residues-rich tracts occupy residues 398–409 (ARDSETKNEEGK) and 432–441 (RTRDVSKHLY). 2 stretches are compositionally biased toward polar residues: residues 447–460 (GLSSSGSDDASNDQ) and 508–519 (PHTQQCKNTSDT). Asparagine 515 is a glycosylation site (N-linked (GlcNAc...) asparagine). An RRIL cleavage motif motif is present at residues 526–529 (RRIL). Asparagine 539 and asparagine 546 each carry an N-linked (GlcNAc...) asparagine glycan. The segment covering 540–557 (LTKEDHNSSSKDKFRETK) has biased composition (basic and acidic residues).

The protein belongs to the bZIP family. In terms of assembly, interacts with BZIP28.

It is found in the endoplasmic reticulum membrane. It localises to the nucleus. In terms of biological role, transcriptional activator involved in stress responses. The protein is bZIP transcription factor 49 of Arabidopsis thaliana (Mouse-ear cress).